A 1607-amino-acid polypeptide reads, in one-letter code: Laminin subunit gamma-1 (1607 aa).

A signal peptide spans 1-33 (MTGGGRAALALQPRGRLWPLLAVLAAVAGCVRA). One can recognise a Laminin N-terminal domain in the interval 44 to 283 (RPQRCMPEFV…AISDFAVGGR (240 aa)). N-linked (GlcNAc...) asparagine glycans are attached at residues asparagine 58 and asparagine 132. Intrachain disulfides connect cysteine 284–cysteine 293, cysteine 286–cysteine 303, cysteine 305–cysteine 314, cysteine 340–cysteine 349, cysteine 342–cysteine 365, cysteine 368–cysteine 377, cysteine 380–cysteine 393, cysteine 396–cysteine 408, cysteine 398–cysteine 414, cysteine 416–cysteine 425, cysteine 428–cysteine 440, cysteine 443–cysteine 454, cysteine 445–cysteine 461, cysteine 463–cysteine 472, and cysteine 475–cysteine 490. 4 Laminin EGF-like domains span residues 284–339 (CKCN…ESLP), 340–395 (CDCN…ACSP), 396–442 (CHCS…GCRP), and 443–492 (CSCD…GCTP). The Laminin EGF-like 5; first part domain maps to 493–502 (CFCFGHSSVC). The 176-residue stretch at 512-687 (DISSTFQIDE…PGVPATWVES (176 aa)) folds into the Laminin IV type A domain. 2 N-linked (GlcNAc...) asparagine glycosylation sites follow: asparagine 574 and asparagine 648. A Laminin EGF-like 5; second part domain is found at 688–721 (CTCPVGYGGQFCETCLPGYRRETPSLGPYSPCVL). 24 disulfides stabilise this stretch: cysteine 722–cysteine 731, cysteine 724–cysteine 738, cysteine 740–cysteine 749, cysteine 752–cysteine 768, cysteine 771–cysteine 779, cysteine 773–cysteine 790, cysteine 793–cysteine 802, cysteine 805–cysteine 823, cysteine 826–cysteine 840, cysteine 828–cysteine 847, cysteine 850–cysteine 859, cysteine 862–cysteine 879, cysteine 882–cysteine 896, cysteine 884–cysteine 903, cysteine 905–cysteine 914, cysteine 917–cysteine 930, cysteine 933–cysteine 945, cysteine 935–cysteine 952, cysteine 954–cysteine 963, cysteine 966–cysteine 978, cysteine 981–cysteine 993, cysteine 983–cysteine 999, cysteine 1001–cysteine 1010, and cysteine 1013–cysteine 1026. Laminin EGF-like domains lie at 722-770 (CTCN…DCQP) and 771-825 (CPCP…LCRP). One can recognise a Laminin EGF-like 8; nidogen-binding domain in the interval 826 to 881 (CQCNDNIDPNAVGNCNRLTGECLKCIYNTAGFYCDRCKEGFFGNPLAPNPADKCKA). 3 consecutive Laminin EGF-like domains span residues 882–932 (CACN…GCER), 933–980 (CDCH…GCKP), and 981–1028 (CDCH…GCQE). Residues asparagine 1020 and asparagine 1105 are each glycosylated (N-linked (GlcNAc...) asparagine). Residues 1029–1607 (CPACYRLVKD…CFNTPSIEKP (579 aa)) form a domain II and I region. Residues 1034–1594 (RLVKDKAAEH…HNLEDIKKTL (561 aa)) adopt a coiled-coil conformation. The residue at position 1147 (serine 1147) is a Phosphoserine. N-linked (GlcNAc...) asparagine glycans are attached at residues asparagine 1159, asparagine 1173, asparagine 1203, asparagine 1221, asparagine 1239, asparagine 1378, asparagine 1393, and asparagine 1437. Phosphoserine is present on serine 1491.

In terms of assembly, laminin is a complex glycoprotein, consisting of three different polypeptide chains (alpha, beta, gamma), which are bound to each other by disulfide bonds into a cross-shaped molecule comprising one long and three short arms with globules at each end. Gamma-1 is a subunit of laminin-1 (laminin-111 or EHS laminin), laminin-2 (laminin-211 or merosin), laminin-3 (laminin-121 or S-laminin), laminin-4 (laminin-221 or S-merosin), laminin-6 (laminin-311 or K-laminin), laminin-7 (laminin-321 or KS-laminin), laminin-8 (laminin-411), laminin-9 (laminin-421), laminin-10 (laminin-511) and laminin-11 (laminin-521). Interacts with SVEP1. Found in the basement membranes (major component).

The protein localises to the secreted. It localises to the extracellular space. The protein resides in the extracellular matrix. Its subcellular location is the basement membrane. In terms of biological role, binding to cells via a high affinity receptor, laminin is thought to mediate the attachment, migration and organization of cells into tissues during embryonic development by interacting with other extracellular matrix components. In Mus musculus (Mouse), this protein is Laminin subunit gamma-1 (Lamc1).